The chain runs to 727 residues: Phosphoribosylformylglycinamidine synthase subunit PurL (727 aa).

The active site involves His-47. ATP contacts are provided by Tyr-50 and Lys-89. Glu-91 contributes to the Mg(2+) binding site. Substrate-binding positions include 92-95 (SHNH) and Arg-114. His-93 acts as the Proton acceptor in catalysis. Asp-115 lines the Mg(2+) pocket. Gln-238 contributes to the substrate binding site. Asp-266 contacts Mg(2+). Residue 310 to 312 (ESQ) participates in substrate binding. The ATP site is built by Asp-490 and Gly-527. Residue Asn-528 participates in Mg(2+) binding. Residue Ser-530 coordinates substrate.

This sequence belongs to the FGAMS family. Monomer. Part of the FGAM synthase complex composed of 1 PurL, 1 PurQ and 2 PurS subunits.

The protein resides in the cytoplasm. The catalysed reaction is N(2)-formyl-N(1)-(5-phospho-beta-D-ribosyl)glycinamide + L-glutamine + ATP + H2O = 2-formamido-N(1)-(5-O-phospho-beta-D-ribosyl)acetamidine + L-glutamate + ADP + phosphate + H(+). Its pathway is purine metabolism; IMP biosynthesis via de novo pathway; 5-amino-1-(5-phospho-D-ribosyl)imidazole from N(2)-formyl-N(1)-(5-phospho-D-ribosyl)glycinamide: step 1/2. Part of the phosphoribosylformylglycinamidine synthase complex involved in the purines biosynthetic pathway. Catalyzes the ATP-dependent conversion of formylglycinamide ribonucleotide (FGAR) and glutamine to yield formylglycinamidine ribonucleotide (FGAM) and glutamate. The FGAM synthase complex is composed of three subunits. PurQ produces an ammonia molecule by converting glutamine to glutamate. PurL transfers the ammonia molecule to FGAR to form FGAM in an ATP-dependent manner. PurS interacts with PurQ and PurL and is thought to assist in the transfer of the ammonia molecule from PurQ to PurL. This chain is Phosphoribosylformylglycinamidine synthase subunit PurL, found in Acidiphilium cryptum (strain JF-5).